The following is a 457-amino-acid chain: MWGGRFSEATDSFVAAFTASVGFDQRFARHDIQGSIAHATMLKECSILEADDVATIIDGLQQVLREIEAGEFNWSIALEDVHMNVESRLTDIVGAVGKKLHTGRSRNDQVATDIRLWLREETDNIIALLVRLQSGLLDLAEQHTDTIMPGFTHLQTAQPVSFGHHVMAWFEMLYRDTERLVDARRRINQMPLGSAALAGTTFPIDRTITAELLGFEGICQNSLDAVSDRDFAIEFTSAASILMMHMSRMSEEIILWMSAQFNFVQIPDRFCTGSSIMPQKKNPDVPELVRGKAARVFGQLMTLLSLMKSQPLAYNKDNQEDKEPLFDCVDTLTGSLLAFADMLPNITPNKENMRAATMKGYATATDLADYLVRNGVAFRDAHEVVGNAVALGIKEGVDLSDLSLAQLQQFSNAIGDDVFDFLTLEGSLAARDHLGGTAPNQVKQAISRGRTRLEVFA.

The protein belongs to the lyase 1 family. Argininosuccinate lyase subfamily.

The protein localises to the cytoplasm. The enzyme catalyses 2-(N(omega)-L-arginino)succinate = fumarate + L-arginine. It participates in amino-acid biosynthesis; L-arginine biosynthesis; L-arginine from L-ornithine and carbamoyl phosphate: step 3/3. The protein is Argininosuccinate lyase of Psychrobacter arcticus (strain DSM 17307 / VKM B-2377 / 273-4).